The following is a 507-amino-acid chain: UDP-glycosyltransferase 73D1 (507 aa).

UDP-alpha-D-glucose is bound by residues S298, S359–Q361, H376–E384, and F398–Q401.

It belongs to the UDP-glycosyltransferase family.

The polypeptide is UDP-glycosyltransferase 73D1 (UGT73D1) (Arabidopsis thaliana (Mouse-ear cress)).